Here is a 411-residue protein sequence, read N- to C-terminus: Peptidase T (411 aa).

His-78 is a binding site for Zn(2+). Asp-80 is an active-site residue. Asp-140 lines the Zn(2+) pocket. The Proton acceptor role is filled by Glu-173. Positions 174, 196, and 379 each coordinate Zn(2+).

The protein belongs to the peptidase M20B family. It depends on Zn(2+) as a cofactor.

The protein localises to the cytoplasm. The catalysed reaction is Release of the N-terminal residue from a tripeptide.. Cleaves the N-terminal amino acid of tripeptides. This is Peptidase T from Yersinia pseudotuberculosis serotype O:1b (strain IP 31758).